A 905-amino-acid polypeptide reads, in one-letter code: Gamma-tubulin complex component 2 (905 aa).

A Phosphotyrosine modification is found at Y83. The disordered stretch occupies residues A877–Q905. Over residues V887–P896 the composition is skewed to pro residues.

The protein belongs to the TUBGCP family. Component of the gamma-tubulin ring complex (gTuRC) consisting of TUBGCP2, TUBGCP3, TUBGCP4, TUBGCP5 and TUBGCP6 and gamma-tubulin TUBG1 or TUBG2. TUBGCP2, TUBGCP3, TUBGCP4, TUBGCP5 and TUBGCP6 assemble in a 5:5:2:1:1 stoichiometry; each is associated with a gamma-tubulin, thereby arranging 14 gamma-tubulins in a helical manner. Gamma-tubulin at the first position is blocked by TUBGCP3 at the last position, allowing 13 protafilaments to grow into a microtubule. The gTuRC (via TUBGCP3 and TUBGCP6) interacts with ACTB and MZT1; the interactions form a luminal bridge that stabilizes the initial structure during complex assembly. The gTuRC (via TUBGCP2) interacts with MZT2A/MZT2B and CDK5RAP2 (via CM1 motif); the interactions play a role in gTuRC activation. Interacts with ATF5; the ATF5:PCNT:polyglutamylated tubulin (PGT) tripartite unites the mother centriole and the pericentriolar material (PCM) in the centrosome.

Its subcellular location is the cytoplasm. The protein resides in the cytoskeleton. The protein localises to the microtubule organizing center. It is found in the centrosome. Its function is as follows. Component of the gamma-tubulin ring complex (gTuRC) which mediates microtubule nucleation. The gTuRC regulates the minus-end nucleation of alpha-beta tubulin heterodimers that grow into microtubule protafilaments, a critical step in centrosome duplication and spindle formation. Plays a role in neuronal migration. The sequence is that of Gamma-tubulin complex component 2 (Tubgcp2) from Mus musculus (Mouse).